The sequence spans 559 residues: Protein NRT1/ PTR FAMILY 2.8 (559 aa).

Helical transmembrane passes span 57–77 (GVFL…LTLA), 92–112 (LLLG…TAAL), 132–152 (KWQL…AGGV), 178–198 (FFNW…TGVV), 206–226 (WVIG…TFVI), 321–341 (LKCV…FILT), 374–394 (VSMI…IPIV), 404–424 (LTLK…VAGF), 437–457 (GSFV…LAGL), 481–501 (VAGA…TLLI), and 529–549 (YFFI…LFAS).

This sequence belongs to the major facilitator superfamily. Proton-dependent oligopeptide transporter (POT/PTR) (TC 2.A.17) family. As to expression, expressed in flowers.

The protein resides in the membrane. The chain is Protein NRT1/ PTR FAMILY 2.8 (NPF2.8) from Arabidopsis thaliana (Mouse-ear cress).